We begin with the raw amino-acid sequence, 194 residues long: Imidazoleglycerol-phosphate dehydratase (194 aa).

Belongs to the imidazoleglycerol-phosphate dehydratase family.

The protein resides in the cytoplasm. It catalyses the reaction D-erythro-1-(imidazol-4-yl)glycerol 3-phosphate = 3-(imidazol-4-yl)-2-oxopropyl phosphate + H2O. It participates in amino-acid biosynthesis; L-histidine biosynthesis; L-histidine from 5-phospho-alpha-D-ribose 1-diphosphate: step 6/9. This is Imidazoleglycerol-phosphate dehydratase from Bacillus licheniformis (strain ATCC 14580 / DSM 13 / JCM 2505 / CCUG 7422 / NBRC 12200 / NCIMB 9375 / NCTC 10341 / NRRL NRS-1264 / Gibson 46).